Here is a 197-residue protein sequence, read N- to C-terminus: Imidazoleglycerol-phosphate dehydratase (197 aa).

This sequence belongs to the imidazoleglycerol-phosphate dehydratase family.

The protein resides in the cytoplasm. The catalysed reaction is D-erythro-1-(imidazol-4-yl)glycerol 3-phosphate = 3-(imidazol-4-yl)-2-oxopropyl phosphate + H2O. It participates in amino-acid biosynthesis; L-histidine biosynthesis; L-histidine from 5-phospho-alpha-D-ribose 1-diphosphate: step 6/9. The chain is Imidazoleglycerol-phosphate dehydratase from Erythrobacter litoralis (strain HTCC2594).